The sequence spans 339 residues: DNA-directed RNA polymerase subunit alpha (339 aa).

The interval Met-1 to Glu-235 is alpha N-terminal domain (alpha-NTD). The segment at Phe-251–Phe-339 is alpha C-terminal domain (alpha-CTD).

The protein belongs to the RNA polymerase alpha chain family. In terms of assembly, homodimer. The RNAP catalytic core consists of 2 alpha, 1 beta, 1 beta' and 1 omega subunit. When a sigma factor is associated with the core the holoenzyme is formed, which can initiate transcription.

The catalysed reaction is RNA(n) + a ribonucleoside 5'-triphosphate = RNA(n+1) + diphosphate. Functionally, DNA-dependent RNA polymerase catalyzes the transcription of DNA into RNA using the four ribonucleoside triphosphates as substrates. The sequence is that of DNA-directed RNA polymerase subunit alpha from Granulibacter bethesdensis (strain ATCC BAA-1260 / CGDNIH1).